The chain runs to 263 residues: UPF0739 protein C1orf74 homolog (263 aa).

It belongs to the UPF0739 family.

This chain is UPF0739 protein C1orf74 homolog, found in Xenopus tropicalis (Western clawed frog).